A 361-amino-acid chain; its full sequence is Phospho-N-acetylmuramoyl-pentapeptide-transferase (361 aa).

Helical transmembrane passes span leucine 28–leucine 48, threonine 74–leucine 94, isoleucine 99–alanine 119, serine 133–aspartate 153, leucine 168–serine 188, valine 203–isoleucine 223, threonine 236–phenylalanine 256, valine 263–isoleucine 283, isoleucine 288–valine 308, and lysine 338–leucine 358.

Belongs to the glycosyltransferase 4 family. MraY subfamily. It depends on Mg(2+) as a cofactor.

The protein resides in the cell membrane. It carries out the reaction UDP-N-acetyl-alpha-D-muramoyl-L-alanyl-gamma-D-glutamyl-meso-2,6-diaminopimeloyl-D-alanyl-D-alanine + di-trans,octa-cis-undecaprenyl phosphate = di-trans,octa-cis-undecaprenyl diphospho-N-acetyl-alpha-D-muramoyl-L-alanyl-D-glutamyl-meso-2,6-diaminopimeloyl-D-alanyl-D-alanine + UMP. It functions in the pathway cell wall biogenesis; peptidoglycan biosynthesis. In terms of biological role, catalyzes the initial step of the lipid cycle reactions in the biosynthesis of the cell wall peptidoglycan: transfers peptidoglycan precursor phospho-MurNAc-pentapeptide from UDP-MurNAc-pentapeptide onto the lipid carrier undecaprenyl phosphate, yielding undecaprenyl-pyrophosphoryl-MurNAc-pentapeptide, known as lipid I. The polypeptide is Phospho-N-acetylmuramoyl-pentapeptide-transferase (Rickettsia rickettsii).